The primary structure comprises 223 residues: Deoxyribose-phosphate aldolase (223 aa).

The active-site Proton donor/acceptor is the aspartate 91. Lysine 153 acts as the Schiff-base intermediate with acetaldehyde in catalysis. Catalysis depends on lysine 182, which acts as the Proton donor/acceptor.

The protein belongs to the DeoC/FbaB aldolase family. DeoC type 1 subfamily.

The protein localises to the cytoplasm. The catalysed reaction is 2-deoxy-D-ribose 5-phosphate = D-glyceraldehyde 3-phosphate + acetaldehyde. Its pathway is carbohydrate degradation; 2-deoxy-D-ribose 1-phosphate degradation; D-glyceraldehyde 3-phosphate and acetaldehyde from 2-deoxy-alpha-D-ribose 1-phosphate: step 2/2. Functionally, catalyzes a reversible aldol reaction between acetaldehyde and D-glyceraldehyde 3-phosphate to generate 2-deoxy-D-ribose 5-phosphate. The chain is Deoxyribose-phosphate aldolase from Streptococcus pyogenes serotype M3 (strain ATCC BAA-595 / MGAS315).